The following is a 202-amino-acid chain: NADH-quinone oxidoreductase subunit C (202 aa).

It belongs to the complex I 30 kDa subunit family. NDH-1 is composed of 14 different subunits. Subunits NuoB, C, D, E, F, and G constitute the peripheral sector of the complex.

Its subcellular location is the cell inner membrane. The enzyme catalyses a quinone + NADH + 5 H(+)(in) = a quinol + NAD(+) + 4 H(+)(out). Its function is as follows. NDH-1 shuttles electrons from NADH, via FMN and iron-sulfur (Fe-S) centers, to quinones in the respiratory chain. The immediate electron acceptor for the enzyme in this species is believed to be ubiquinone. Couples the redox reaction to proton translocation (for every two electrons transferred, four hydrogen ions are translocated across the cytoplasmic membrane), and thus conserves the redox energy in a proton gradient. This is NADH-quinone oxidoreductase subunit C from Brucella canis (strain ATCC 23365 / NCTC 10854 / RM-666).